The following is a 71-amino-acid chain: Disintegrin simusmin (71 aa).

Residues 1–71 (AGEECDCGSP…SADCPRNPFH (71 aa)) form the Disintegrin domain. Disulfide bonds link Cys-5-Cys-20, Cys-7-Cys-15, Cys-14-Cys-37, Cys-28-Cys-34, Cys-33-Cys-58, and Cys-46-Cys-65. Positions 50-52 (RGD) match the Cell attachment site motif.

It belongs to the venom metalloproteinase (M12B) family. P-II subfamily. P-IIa sub-subfamily. In terms of assembly, monomer. As to expression, expressed by the venom gland.

It is found in the secreted. Functionally, inhibits ADP- (IC(50)=56 nM) and collagen-induced (IC(50)=49 nM) aggregation of human platelets. In vitro, inhibits adhesion of endothelial cells to vitronectin, type-I collagen and, to a lower degree, fibronectin and laminin. The chain is Disintegrin simusmin from Crotalus simus (Central American rattlesnake).